Here is a 348-residue protein sequence, read N- to C-terminus: Probable mitochondrial adenine nucleotide transporter BTL1 (348 aa).

Solcar repeat units lie at residues Ser-46–Ala-129, Ser-157–Ser-241, and Leu-251–Ile-338. Helical transmembrane passes span Phe-52–Ile-72, Gly-104–Glu-124, Ile-156–Val-176, Phe-213–Phe-233, Met-256–Val-276, and Val-321–Ala-341.

The protein belongs to the mitochondrial carrier (TC 2.A.29) family.

It localises to the mitochondrion inner membrane. Its function is as follows. Probable mitochondrial adenylate carrier that catalyzes the transport of ATP, ADP and AMP. This Arabidopsis thaliana (Mouse-ear cress) protein is Probable mitochondrial adenine nucleotide transporter BTL1.